We begin with the raw amino-acid sequence, 1464 residues long: Collagen alpha-1(I) chain (1464 aa).

Positions 1 to 22 (MFSFVDLRLLLLLAATALLTHG) are cleaved as a signal peptide. The propeptide at 23-161 (QEEGQVEGQD…PPGLGGNFAP (139 aa)) is N-terminal propeptide. The 59-residue stretch at 38–96 (ITCVQNGLRYHDRDVWKPEPCRICVCDNGKVLCDDVICDETKNCPGAEVPEGECCPVCP) folds into the VWFC domain. Residues 98-1214 (GSESPTDQET…PQEKAHDGGR (1117 aa)) form a disordered region. The segment covering 138–153 (PGLPGPPGPPGPPGPP) has biased composition (pro residues). Gln-162 carries the post-translational modification Pyrrolidone carboxylic acid. The segment at 162–178 (QLSYGYDEKSTGGISVP) is nonhelical region (N-terminal). Lys-170 carries the allysine modification. Ser-171 is modified (phosphoserine). Residues 179–1192 (GPMGPSGPRG…PGPPGPPGPP (1014 aa)) are triple-helical region. 11 positions are modified to 4-hydroxyproline: Pro-190, Pro-193, Pro-196, Pro-205, Pro-208, Pro-211, Pro-226, Pro-241, Pro-247, Pro-256, and Pro-262. Residues 198-217 (PQGFQGPPGEPGEPGASGPM) show a composition bias toward low complexity. Basic and acidic residues predominate over residues 229–243 (NGDDGEAGKPGRPGE). Lys-265 is modified (5-hydroxylysine; alternate). The O-linked (Gal...) hydroxylysine; alternate glycan is linked to Lys-265. Position 271 is a phosphoserine (Ser-271). The segment covering 279–295 (DAGPAGPKGEPGSPGEN) has biased composition (low complexity). 4-hydroxyproline is present on residues Pro-289, Pro-292, Pro-298, Pro-307, and Pro-313. The span at 318 to 331 (PAGARGNDGATGAA) shows a compositional bias: low complexity. Positions 333-345 (PPGPTGPAGPPGF) are enriched in pro residues. Pro-334, Pro-343, Pro-346, Pro-373, Pro-376, Pro-388, Pro-394, Pro-403, Pro-409, Pro-412, and Pro-427 each carry 4-hydroxyproline. The segment covering 379 to 418 (AGAAGPAGNPGADGQPGAKGANGAPGIAGAPGFPGARGPS) has biased composition (low complexity). Lys-430 is modified (5-hydroxylysine). 4-hydroxyproline is present on residues Pro-436, Pro-439, Pro-451, Pro-460, Pro-475, Pro-481, Pro-490, and Pro-496. The span at 448–457 (KGEPGPVGVQ) shows a compositional bias: low complexity. The span at 485–494 (GERGGPGSRG) shows a compositional bias: gly residues. The residue at position 505 (Lys-505) is a 5-hydroxylysine. Pro-514, Pro-523, Pro-529, Pro-535, Pro-544, Pro-547, Pro-556, Pro-565, Pro-571, Pro-583, Pro-592, Pro-601, Pro-604, Pro-622, Pro-640, Pro-646, Pro-652, Pro-658, Pro-664, Pro-670, Pro-682, Pro-691, Pro-703, Pro-715, Pro-718, Pro-724, Pro-730, and Pro-739 each carry 4-hydroxyproline. Residues 538 to 564 (KGLTGSPGSPGPDGKTGPPGPAGQDGR) show a composition bias toward low complexity. Residues 573 to 592 (ARGQAGVMGFPGPKGAAGEP) are compositionally biased toward low complexity. Residues 634–661 (QGPAGSPGFQGLPGPAGPPGEAGKPGEQ) show a composition bias toward low complexity. Low complexity predominate over residues 696 to 724 (PRGANGAPGNDGAKGDAGAPGAPGSQGAP). A Cell attachment site motif is present at residues 745–747 (RGD). Lys-751 is modified (5-hydroxylysine). 3 positions are modified to 4-hydroxyproline: Pro-757, Pro-772, and Pro-778. Over residues 784–798 (SGPSGPAGPTGARGA) the composition is skewed to low complexity. Ser-787 bears the Phosphoserine mark. Residues Pro-799, Pro-805, Pro-808, Pro-817, Pro-823, Pro-841, Pro-850, and Pro-859 each carry the 4-hydroxyproline modification. Low complexity predominate over residues 811-838 (AGFAGPPGADGQPGAKGEPGDAGAKGDA). The segment covering 840–852 (PPGPAGPAGPPGP) has biased composition (pro residues). Low complexity predominate over residues 853-883 (IGNVGAPGAKGARGSAGPPGATGFPGAAGRV). Position 862 is a 5-hydroxylysine (Lys-862). 4-hydroxyproline occurs at positions 871 and 877. Pro-885 carries the post-translational modification 3-hydroxyproline. 16 positions are modified to 4-hydroxyproline: Pro-886, Pro-895, Pro-898, Pro-919, Pro-928, Pro-937, Pro-946, Pro-964, Pro-973, Pro-976, Pro-982, Pro-997, Pro-1003, Pro-1009, Pro-1018, and Pro-1024. A compositionally biased stretch (low complexity) spans 912-921 (ETGPAGRPGE). Residues 931-955 (AGEKGSPGADGPAGAPGTPGPQGIA) are compositionally biased toward low complexity. Residues 996–1006 (PPGPMGPPGLA) are compositionally biased toward pro residues. Lys-1033 bears the 5-hydroxylysine mark. A compositionally biased stretch (pro residues) spans 1042 to 1057 (AGPPGAPGAPGAPGPV). Pro-1045, Pro-1048, and Pro-1051 each carry 4-hydroxyproline. Over residues 1078–1092 (VGPVGARGPAGPQGP) the composition is skewed to low complexity. A Cell attachment site motif is present at residues 1093-1095 (RGD). Residues 1093 to 1107 (RGDKGETGEQGDRGI) show a composition bias toward basic and acidic residues. A 5-hydroxylysine modification is found at Lys-1096. Lys-1108 carries the post-translational modification 5-hydroxylysine; alternate. The O-linked (Gal...) hydroxylysine; alternate glycan is linked to Lys-1108. 5 positions are modified to 4-hydroxyproline: Pro-1120, Pro-1123, Pro-1126, Pro-1144, and Pro-1159. Residues 1126–1159 (PGEQGPSGASGPAGPRGPPGSAGAPGKDGLNGLP) show a composition bias toward low complexity. 3-hydroxyproline is present on Pro-1164. Pro-1165 bears the 4-hydroxyproline mark. The segment covering 1177-1192 (VGPPGPPGPPGPPGPP) has biased composition (pro residues). The residue at position 1179 (Pro-1179) is a 3-hydroxyproline. Residue Pro-1180 is modified to 4-hydroxyproline. Pro-1182 is modified (3-hydroxyproline). Residue Pro-1183 is modified to 4-hydroxyproline. The residue at position 1185 (Pro-1185) is a 3-hydroxyproline. Pro-1186, Pro-1189, and Pro-1192 each carry 4-hydroxyproline. The interval 1193 to 1218 (SAGFDFSFLPQPPQEKAHDGGRYYRA) is nonhelical region (C-terminal). Lys-1208 bears the Allysine mark. A propeptide spans 1219–1464 (DDANVVRDRD…GFDVGPVCFL (246 aa)) (C-terminal propeptide). A Fibrillar collagen NC1 domain is found at 1229-1464 (LEVDTTLKSL…GFDVGPVCFL (236 aa)). 3 cysteine pairs are disulfide-bonded: Cys-1259-Cys-1291, Cys-1299-Cys-1462, and Cys-1370-Cys-1415. Ca(2+) contacts are provided by Asp-1277, Asn-1279, Gln-1280, Cys-1282, and Asp-1285. N-linked (GlcNAc...) asparagine glycosylation occurs at Asn-1365.

It belongs to the fibrillar collagen family. As to quaternary structure, trimers of one alpha 2(I) and two alpha 1(I) chains. Interacts with MRC2. Interacts with TRAM2. Interacts with MFAP4 in a Ca (2+)-dependent manner. In terms of processing, contains mostly 4-hydroxyproline. Proline residues at the third position of the tripeptide repeating unit (G-X-Y) are hydroxylated in some or all of the chains. Post-translationally, contains 3-hydroxyproline at a few sites. This modification occurs on the first proline residue in the sequence motif Gly-Pro-Hyp, where Hyp is 4-hydroxyproline. Lysine residues at the third position of the tripeptide repeating unit (G-X-Y) are 5-hydroxylated in some or all of the chains. In terms of processing, O-glycosylated on hydroxylated lysine residues. The O-linked glycan consists of a Glc-Gal disaccharide. In terms of tissue distribution, forms the fibrils of tendon, ligaments and bones. In bones the fibrils are mineralized with calcium hydroxyapatite.

It localises to the secreted. Its subcellular location is the extracellular space. The protein localises to the extracellular matrix. Functionally, type I collagen is a member of group I collagen (fibrillar forming collagen). The chain is Collagen alpha-1(I) chain (COL1A1) from Homo sapiens (Human).